The following is a 227-amino-acid chain: Glutathione S-transferase U27 (227 aa).

The GST N-terminal domain maps to 4–84; it reads EEVVVLNFWP…YIDEVWKDDK (81 aa). Glutathione-binding positions include 14–15, 41–42, 55–56, and 68–69; these read SM, QK, KI, and ES. The GST C-terminal domain maps to 92–217; it reads DPYQKSQCRF…LKIFDRVTQI (126 aa).

Belongs to the GST superfamily. Tau family.

The protein resides in the cytoplasm. Its subcellular location is the cytosol. The enzyme catalyses RX + glutathione = an S-substituted glutathione + a halide anion + H(+). Functionally, may be involved in the conjugation of reduced glutathione to a wide number of exogenous and endogenous hydrophobic electrophiles and have a detoxification role against certain herbicides. The protein is Glutathione S-transferase U27 (GSTU27) of Arabidopsis thaliana (Mouse-ear cress).